Consider the following 364-residue polypeptide: Transposase for insertion sequence element IS1111A (364 aa).

The protein belongs to the transposase IS1111A/IS1328/IS1533 family.

Functionally, required for the transposition of the insertion element. This chain is Transposase for insertion sequence element IS1111A, found in Coxiella burnetii (strain RSA 493 / Nine Mile phase I).